A 361-amino-acid polypeptide reads, in one-letter code: 5-formaminoimidazole-4-carboxamide-1-(beta)-D-ribofuranosyl 5'-monophosphate synthetase (361 aa).

The 5-amino-1-(5-phospho-beta-D-ribosyl)imidazole-4-carboxamide site is built by His27 and Ser94. The region spanning 116 to 348 (RAILRWEAER…MGQRIAKEIK (233 aa)) is the ATP-grasp domain. ATP-binding positions include 146–208 (PDDI…ANYC) and Glu230. Asn258 serves as a coordination point for 5-amino-1-(5-phospho-beta-D-ribosyl)imidazole-4-carboxamide. Mg(2+)-binding residues include Gln297 and Glu310.

Belongs to the phosphohexose mutase family. The cofactor is Mg(2+). It depends on Mn(2+) as a cofactor.

It catalyses the reaction 5-amino-1-(5-phospho-beta-D-ribosyl)imidazole-4-carboxamide + formate + ATP = 5-formamido-1-(5-phospho-D-ribosyl)imidazole-4-carboxamide + ADP + phosphate. Its pathway is purine metabolism; IMP biosynthesis via de novo pathway; 5-formamido-1-(5-phospho-D-ribosyl)imidazole-4-carboxamide from 5-amino-1-(5-phospho-D-ribosyl)imidazole-4-carboxamide (formate route): step 1/1. Catalyzes the ATP- and formate-dependent formylation of 5-aminoimidazole-4-carboxamide-1-beta-d-ribofuranosyl 5'-monophosphate (AICAR) to 5-formaminoimidazole-4-carboxamide-1-beta-d-ribofuranosyl 5'-monophosphate (FAICAR) in the absence of folates. This Methanococcus maripaludis (strain C6 / ATCC BAA-1332) protein is 5-formaminoimidazole-4-carboxamide-1-(beta)-D-ribofuranosyl 5'-monophosphate synthetase.